Reading from the N-terminus, the 711-residue chain is Origin recognition complex subunit 3 (711 aa).

A phosphoserine mark is found at serine 23 and serine 516.

Belongs to the ORC3 family. Component of ORC, a complex composed of at least 6 subunits: ORC1, ORC2, ORC3, ORC4, ORC5 and ORC6. ORC is regulated in a cell-cycle dependent manner. It is sequentially assembled at the exit from anaphase of mitosis and disassembled as cells enter S phase. In terms of processing, multi-mono-ubiquitinated by OBI1; ubiquitination is important for efficient DNA replication origin site activation. Ubiquitination levels are low in mitotic and early G1-phAse cells and are induced in late G1-/early S-phase, peaking in S-phase and decrease toward the end of the cell cycle.

It localises to the nucleus. The protein localises to the chromosome. Its function is as follows. Component of the origin recognition complex (ORC) that binds origins of replication. DNA-binding is ATP-dependent. The specific DNA sequences that define origins of replication have not been identified yet. ORC is required to assemble the pre-replication complex necessary to initiate DNA replication. Binds histone H3 and H4 trimethylation marks H3K9me3, H3K27me3 and H4K20me3. This is Origin recognition complex subunit 3 (ORC3) from Homo sapiens (Human).